The following is a 444-amino-acid chain: Porin AaxA (444 aa).

An N-terminal signal peptide occupies residues 1 to 19; the sequence is MAFSRFYLLTALYTGGILA. The interval 42 to 68 is disordered; sequence KNSTQDSDSSPSESSPHPRQEPRRHVL. Over residues 46-56 the composition is skewed to low complexity; that stretch reads QDSDSSPSESS.

Belongs to the OprB family.

The protein localises to the cell outer membrane. Its function is as follows. Facilitates L-arginine uptake, as part of the AaxABC system. The arginine uptake by the bacterium in the macrophage may be a virulence factor against the host innate immune response. The polypeptide is Porin AaxA (aaxA) (Chlamydia felis (strain Fe/C-56) (Chlamydophila felis)).